Here is a 139-residue protein sequence, read N- to C-terminus: D-ribose pyranase (139 aa).

Residue His20 is the Proton donor of the active site. Substrate contacts are provided by residues Asp28, His106, and 128–130; that span reads YAN.

The protein belongs to the RbsD / FucU family. RbsD subfamily. In terms of assembly, homodecamer.

The protein resides in the cytoplasm. The enzyme catalyses beta-D-ribopyranose = beta-D-ribofuranose. It functions in the pathway carbohydrate metabolism; D-ribose degradation; D-ribose 5-phosphate from beta-D-ribopyranose: step 1/2. In terms of biological role, catalyzes the interconversion of beta-pyran and beta-furan forms of D-ribose. This is D-ribose pyranase from Pasteurella multocida (strain Pm70).